A 358-amino-acid polypeptide reads, in one-letter code: Methylthioribose-1-phosphate isomerase (358 aa).

Substrate contacts are provided by residues Arg-54–Ala-56, Arg-96, and Gln-205. Asp-246 functions as the Proton donor in the catalytic mechanism. Substrate is bound at residue Asn-256–Lys-257.

This sequence belongs to the eIF-2B alpha/beta/delta subunits family. MtnA subfamily.

It carries out the reaction 5-(methylsulfanyl)-alpha-D-ribose 1-phosphate = 5-(methylsulfanyl)-D-ribulose 1-phosphate. The protein operates within amino-acid biosynthesis; L-methionine biosynthesis via salvage pathway; L-methionine from S-methyl-5-thio-alpha-D-ribose 1-phosphate: step 1/6. In terms of biological role, catalyzes the interconversion of methylthioribose-1-phosphate (MTR-1-P) into methylthioribulose-1-phosphate (MTRu-1-P). This Pseudomonas savastanoi pv. phaseolicola (strain 1448A / Race 6) (Pseudomonas syringae pv. phaseolicola (strain 1448A / Race 6)) protein is Methylthioribose-1-phosphate isomerase.